The primary structure comprises 1248 residues: Reverse gyrase 1 (1248 aa).

The segment at I7–Y44 adopts an RG N-terminal-type zinc-finger fold. Zn(2+)-binding residues include C16, C19, C34, and C37. ATP is bound by residues Q92 and A109–T116. The 167-residue stretch at I96–N262 folds into the Helicase ATP-binding domain. Positions D219–D222 match the DEAD box motif. The interval Q621 to R1248 is topoisomerase I. The 165-residue stretch at T625–V789 folds into the Toprim domain. E631 is a binding site for Mg(2+). The RG C-terminal-type; atypical zinc finger occupies I706–D735. Zn(2+) is bound by residues C709, H713, C724, and C727. D758 contacts Mg(2+). One can recognise a Topo IA-type catalytic domain in the interval N805–R1248. Y965 acts as the O-(5'-phospho-DNA)-tyrosine intermediate in catalysis.

In the N-terminal section; belongs to the DEAD box helicase family. DDVD subfamily. It in the C-terminal section; belongs to the type IA topoisomerase family. Monomer. Zn(2+) serves as cofactor. Requires Mg(2+) as cofactor. In terms of processing, the N-terminus is blocked.

The protein resides in the cytoplasm. The catalysed reaction is ATP + H2O = ADP + phosphate + H(+). Functionally, modifies the topological state of DNA by introducing positive supercoils in an ATP-dependent process. Increases the linking number in steps of +1. Has a DNA-stimulated ATPase activity; closed circular ssDNA stimulates ATPase much better than dsDNA although negative supercoiled, positive supercoiled and relaxed dsDNA all stimulate ATPase activity. All NTPs permit topoisomerization (relaxation) of negatively supercoiled dsDNA without nucleotide hydrolysis. It transiently cleaves a single DNA strand and remains covalently bound to the 5' DNA end. Acts via a tyrosine residue. Reverse gyrase binds and unwinds DNA independently of ATP binding and DNA cleavage. May be involved in rewinding the DNA strands in the regions of the chromosome that have opened up to allow transcription or replication, probably acts via ssDNA regions of the chromosome. The sequence is that of Reverse gyrase 1 from Sulfolobus acidocaldarius (strain ATCC 33909 / DSM 639 / JCM 8929 / NBRC 15157 / NCIMB 11770).